Here is an 864-residue protein sequence, read N- to C-terminus: MTSFEIRQMWLKFFASKNHHIAKSSSLIPRNEANLLWVNAGITPLKKYFDGTQTPPFRRITNVQKCIRTNDIKNVGKTSRHHTFFEMLGNFSIGNYFKKEAIHYAFELLTSPKWFAFPLEKLYITYFFQDQDTYQYWLDLGVEKNHLIPLKSNFWQIGPGPSGPCTEIFFDRGKTFDPRNKELIIQDLENDRFIEIWNIVFSQYNCDPKLPIEKYQELPSKNIDTGAGLERLACILQNTKTNFETDLFFPLIKALEKMTQIKYTGQESFKIIADHLKTLVFAINDGAVLTNEKRGYVLKKLLRRAANEGKKLGLDKPFLHQLVPPTAAMMKDFYKELCTNQEIIAKVLLQQENIFEQTLKTAEKTFLQHLTQNTLSGQNFFKLYDTYGIPEDLILDYAKKKNITTDYQKFQELLHDHQNLSKQNQTSQIHMNKQEESFLQFLTPSEFIGYTNFTCKTKVIKVFDKGIVLEKTPFYANMGGQIEDEGWIDNTKVTKITKLPNGQILHEVQGNFCEGQEVYACIEKTKRNQISYHHTATHLLEAVLQKQLGSHLKKQGSSVGFSSLRYDFNHFEKITPQTLLQIEKEVNQLIQKSVPVKIEQLSIPDAQKKYATLLEQNQKAKYKDKVRIVSIDTFSVDLCGGTHATNTKDLEHFTILSCESISSGIYRIEAVCNNNCQESLNAKLVPYQNDLHQLTQKAKSLQTQNLIFDVKNFPPITQSYQDILNYQKHIKAQQQALVLFEKKVLEYHQKNMVQAESNFLPPQITKKMMLTIEEEKPLEVLKFFMNHIFDKYHLEVLFLSYVQPEKIVFLCKSKTLHAGNLIKEAVSLVCGSGGGNASLAQGGTKKTKNLEQVLNFVKTKLEIN.

H534, H538, C639, and H643 together coordinate Zn(2+).

The protein belongs to the class-II aminoacyl-tRNA synthetase family. The cofactor is Zn(2+).

The protein localises to the cytoplasm. It carries out the reaction tRNA(Ala) + L-alanine + ATP = L-alanyl-tRNA(Ala) + AMP + diphosphate. Functionally, catalyzes the attachment of alanine to tRNA(Ala) in a two-step reaction: alanine is first activated by ATP to form Ala-AMP and then transferred to the acceptor end of tRNA(Ala). Also edits incorrectly charged Ser-tRNA(Ala) and Gly-tRNA(Ala) via its editing domain. This chain is Alanine--tRNA ligase, found in Onion yellows phytoplasma (strain OY-M).